The following is a 351-amino-acid chain: Autoinducer 2 import system permease protein LsrC (351 aa).

Helical transmembrane passes span 14–34 (LLAI…YFSL), 39–59 (MIFS…LVML), 70–90 (ITGL…GLVA), 93–113 (LFAL…VTWL), 115–135 (IPAI…MLLL), 155–175 (ILFS…AMAW), 213–233 (MNGV…GFIP), 252–272 (GISL…AFLL), and 284–304 (LPAW…LVFD).

The protein belongs to the binding-protein-dependent transport system permease family. AraH/RbsC subfamily. In terms of assembly, the complex is composed of two ATP-binding proteins (LsrA), two transmembrane proteins (LsrC and LsrD) and a solute-binding protein (LsrB).

It is found in the cell inner membrane. Its function is as follows. Part of the ABC transporter complex LsrABCD involved in autoinducer 2 (AI-2) import. Probably responsible for the translocation of the substrate across the membrane. This Yersinia pseudotuberculosis serotype O:3 (strain YPIII) protein is Autoinducer 2 import system permease protein LsrC (lsrC).